Consider the following 130-residue polypeptide: Large ribosomal subunit protein bL12c (130 aa).

The protein belongs to the bacterial ribosomal protein bL12 family. As to quaternary structure, homodimer. Part of the ribosomal stalk of the 50S ribosomal subunit. Forms a multimeric L10(L12)X complex, where L10 forms an elongated spine to which 2 to 4 L12 dimers bind in a sequential fashion. Binds GTP-bound translation factors.

The protein localises to the plastid. In terms of biological role, forms part of the ribosomal stalk which helps the ribosome interact with GTP-bound translation factors. Is thus essential for accurate translation. In Prototheca wickerhamii, this protein is Large ribosomal subunit protein bL12c.